The primary structure comprises 365 residues: GTPase Obg (365 aa).

The 159-residue stretch at 1-159 folds into the Obg domain; the sequence is MKFIDEARIE…RMLKLELKVL (159 aa). Positions 160–334 constitute an OBG-type G domain; that stretch reads ADVGLLGMPN…LVYAIKDHLA (175 aa). Residues 166–173, 191–195, 213–216, 284–287, and 315–317 contribute to the GTP site; these read GMPNAGKS, FTTLH, DIPG, NKLD, and SAL. Residues Ser-173 and Thr-193 each contribute to the Mg(2+) site.

It belongs to the TRAFAC class OBG-HflX-like GTPase superfamily. OBG GTPase family. In terms of assembly, monomer. Mg(2+) serves as cofactor.

It localises to the cytoplasm. Its function is as follows. An essential GTPase which binds GTP, GDP and possibly (p)ppGpp with moderate affinity, with high nucleotide exchange rates and a fairly low GTP hydrolysis rate. Plays a role in control of the cell cycle, stress response, ribosome biogenesis and in those bacteria that undergo differentiation, in morphogenesis control. This chain is GTPase Obg, found in Cupriavidus metallidurans (strain ATCC 43123 / DSM 2839 / NBRC 102507 / CH34) (Ralstonia metallidurans).